Reading from the N-terminus, the 542-residue chain is Chaperonin GroEL 2 (542 aa).

Residues Thr29 to Pro32, Asp86 to Thr90, Gly413, Asn477 to Ala479, and Asp493 contribute to the ATP site.

This sequence belongs to the chaperonin (HSP60) family. Forms a cylinder of 14 subunits composed of two heptameric rings stacked back-to-back. Interacts with the co-chaperonin GroES.

It is found in the cytoplasm. It carries out the reaction ATP + H2O + a folded polypeptide = ADP + phosphate + an unfolded polypeptide.. Functionally, together with its co-chaperonin GroES, plays an essential role in assisting protein folding. The GroEL-GroES system forms a nano-cage that allows encapsulation of the non-native substrate proteins and provides a physical environment optimized to promote and accelerate protein folding. In Kineococcus radiotolerans (strain ATCC BAA-149 / DSM 14245 / SRS30216), this protein is Chaperonin GroEL 2.